Reading from the N-terminus, the 78-residue chain is Major outer membrane lipoprotein Lpp 1 (78 aa).

An N-terminal signal peptide occupies residues 1 to 20; the sequence is MNRTKLVLGAVILGSTLLAG. Cys-21 is lipidated: N-palmitoyl cysteine. Cys-21 carries the S-diacylglycerol cysteine lipid modification. 2 consecutive repeats follow at residues 24-34 and 38-48; these read NAKIDQLSSDV and NAKVDQLSNDV. Residues 27 to 75 adopt a coiled-coil conformation; the sequence is IDQLSSDVQTLNAKVDQLSNDVNAMRSDVQAAKDDAARANQRLDNQATK. The segment at 56 to 78 is disordered; it reads QAAKDDAARANQRLDNQATKYRK. Over residues 68-78 the composition is skewed to polar residues; it reads RLDNQATKYRK. Residue Lys-78 is modified to N6-murein peptidoglycan lysine.

Belongs to the Lpp family. Homotrimer.

It is found in the cell outer membrane. The protein localises to the secreted. The protein resides in the cell wall. In terms of biological role, a highly abundant outer membrane lipoprotein that controls the distance between the inner and outer membranes. The only protein known to be covalently linked to the peptidoglycan network (PGN). Also non-covalently binds the PGN. The link between the cell outer membrane and PGN contributes to maintenance of the structural and functional integrity of the cell envelope, and maintains the correct distance between the PGN and the outer membrane. The sequence is that of Major outer membrane lipoprotein Lpp 1 from Salmonella paratyphi A (strain ATCC 9150 / SARB42).